Reading from the N-terminus, the 85-residue chain is Large ribosomal subunit protein bL27 (85 aa).

A disordered region spans residues 1–24; that stretch reads MAHKKGQGSSRNGRDSNAQRRGVK.

It belongs to the bacterial ribosomal protein bL27 family.

The polypeptide is Large ribosomal subunit protein bL27 (Syntrophus aciditrophicus (strain SB)).